The chain runs to 147 residues: Putative pre-16S rRNA nuclease (147 aa).

It belongs to the YqgF nuclease family.

It is found in the cytoplasm. Functionally, could be a nuclease involved in processing of the 5'-end of pre-16S rRNA. The sequence is that of Putative pre-16S rRNA nuclease from Acinetobacter baylyi (strain ATCC 33305 / BD413 / ADP1).